Here is a 311-residue protein sequence, read N- to C-terminus: Heme A synthase (311 aa).

Residues 1–6 (MQRFIK) are Cytoplasmic-facing. The helical transmembrane segment at 7–27 (WLAVITSLDLLIVLLGGALVT) threads the bilayer. Residues 28-62 (KTGSGQGCGKSWPLCNGEFVPSNLSMETIIELSHR) lie on the Extracellular side of the membrane. Cysteine 35 and cysteine 42 are disulfide-bonded. The active site involves glutamate 58. Histidine 61 serves as a coordination point for heme o. The helical transmembrane segment at 63–83 (LTSGSAGILVTLLCILSWKYY) threads the bilayer. Topologically, residues 84 to 91 (KHVRETKT) are cytoplasmic. The helical transmembrane segment at 92–112 (LAILSFVFLVAQALMGAAAVV) threads the bilayer. At 113 to 121 (WGQMPAVLA) the chain is on the extracellular side. The helical transmembrane segment at 122–142 (IHFGISLISFASVILLTCLIF) threads the bilayer. Position 123 (histidine 123) interacts with heme o. At 143–159 (EIDQKFDARSLIMDKKM) the chain is on the cytoplasmic side. A helical membrane pass occupies residues 160–180 (KFHIYGVTIYSYIVVYTGALV). Topologically, residues 181-211 (RHERASLACPDFPLCSKNRPMPTQLHEWVQM) are extracellular. The cysteines at positions 189 and 195 are disulfide-linked. A helical membrane pass occupies residues 212–232 (GHRVAAMLIFAWILYAMILAI). Histidine 213 provides a ligand contact to heme b. The Cytoplasmic portion of the chain corresponds to 233–243 (RHYKQQPVVYW). Residues 244 to 264 (GWIISFILVTLQAIVGILVVF) form a helical membrane-spanning segment. Over 265 to 271 (TNASLSM) the chain is Extracellular. Residues 272–292 (ALLHSLFISCLFAVLCYLVML) form a helical membrane-spanning segment. Heme b is bound at residue histidine 275. Residues 293–311 (GTRSKVNAKEAASISKQTK) lie on the Cytoplasmic side of the membrane.

It belongs to the COX15/CtaA family. Type 1 subfamily. In terms of assembly, interacts with CtaB. Requires heme b as cofactor.

The protein resides in the cell membrane. It carries out the reaction Fe(II)-heme o + 2 A + H2O = Fe(II)-heme a + 2 AH2. The protein operates within porphyrin-containing compound metabolism; heme A biosynthesis; heme A from heme O: step 1/1. Catalyzes the conversion of heme O to heme A by two successive hydroxylations of the methyl group at C8. The first hydroxylation forms heme I, the second hydroxylation results in an unstable dihydroxymethyl group, which spontaneously dehydrates, resulting in the formyl group of heme A. In Bacillus cereus (strain AH187), this protein is Heme A synthase.